We begin with the raw amino-acid sequence, 500 residues long: Probable cytosol aminopeptidase (500 aa).

Mn(2+) contacts are provided by lysine 268 and aspartate 273. Lysine 280 is a catalytic residue. Positions 291, 350, and 352 each coordinate Mn(2+). Residue arginine 354 is part of the active site.

It belongs to the peptidase M17 family. Mn(2+) is required as a cofactor.

The protein resides in the cytoplasm. It carries out the reaction Release of an N-terminal amino acid, Xaa-|-Yaa-, in which Xaa is preferably Leu, but may be other amino acids including Pro although not Arg or Lys, and Yaa may be Pro. Amino acid amides and methyl esters are also readily hydrolyzed, but rates on arylamides are exceedingly low.. The enzyme catalyses Release of an N-terminal amino acid, preferentially leucine, but not glutamic or aspartic acids.. Its function is as follows. Presumably involved in the processing and regular turnover of intracellular proteins. Catalyzes the removal of unsubstituted N-terminal amino acids from various peptides. This chain is Probable cytosol aminopeptidase, found in Baumannia cicadellinicola subsp. Homalodisca coagulata.